A 353-amino-acid chain; its full sequence is Elongation factor Ts (353 aa).

The tract at residues 80–83 (TDFV) is involved in Mg(2+) ion dislocation from EF-Tu.

The protein belongs to the EF-Ts family.

It localises to the cytoplasm. Functionally, associates with the EF-Tu.GDP complex and induces the exchange of GDP to GTP. It remains bound to the aminoacyl-tRNA.EF-Tu.GTP complex up to the GTP hydrolysis stage on the ribosome. This Sulfurovum sp. (strain NBC37-1) protein is Elongation factor Ts.